A 287-amino-acid polypeptide reads, in one-letter code: Shikimate dehydrogenase (NADP(+)) (287 aa).

Shikimate-binding positions include 20–22 (SRS) and T67. Catalysis depends on K71, which acts as the Proton acceptor. An NADP(+)-binding site is contributed by E84. 2 residues coordinate shikimate: N93 and D108. NADP(+)-binding positions include 132–136 (GAGGA) and M226. Y228 lines the shikimate pocket. G250 serves as a coordination point for NADP(+).

This sequence belongs to the shikimate dehydrogenase family. In terms of assembly, homodimer.

The catalysed reaction is shikimate + NADP(+) = 3-dehydroshikimate + NADPH + H(+). The protein operates within metabolic intermediate biosynthesis; chorismate biosynthesis; chorismate from D-erythrose 4-phosphate and phosphoenolpyruvate: step 4/7. Functionally, involved in the biosynthesis of the chorismate, which leads to the biosynthesis of aromatic amino acids. Catalyzes the reversible NADPH linked reduction of 3-dehydroshikimate (DHSA) to yield shikimate (SA). The chain is Shikimate dehydrogenase (NADP(+)) from Bordetella petrii (strain ATCC BAA-461 / DSM 12804 / CCUG 43448).